The chain runs to 485 residues: Chromosomal replication initiator protein DnaA (485 aa).

Residues 1-74 are domain I, interacts with DnaA modulators; sequence MEKSKNIWSL…ILTNNGYDNV (74 aa). Positions 74–140 are domain II; the sequence is VTIVFTNQSP…EEEPKNFKNP (67 aa). Positions 141 to 357 are domain III, AAA+ region; sequence FLKKRYTFEN…AAVTKLKAYI (217 aa). Residues glycine 185, glycine 187, lysine 188, and threonine 189 each contribute to the ATP site. The domain IV, binds dsDNA stretch occupies residues 358–485; it reads DLDNIEIDID…TELMNKIKKN (128 aa).

Belongs to the DnaA family. In terms of assembly, oligomerizes as a right-handed, spiral filament on DNA at oriC.

The protein resides in the cytoplasm. Functionally, plays an essential role in the initiation and regulation of chromosomal replication. ATP-DnaA binds to the origin of replication (oriC) to initiate formation of the DNA replication initiation complex once per cell cycle. Binds the DnaA box (a 9 base pair repeat at the origin) and separates the double-stranded (ds)DNA. Forms a right-handed helical filament on oriC DNA; dsDNA binds to the exterior of the filament while single-stranded (ss)DNA is stabiized in the filament's interior. The ATP-DnaA-oriC complex binds and stabilizes one strand of the AT-rich DNA unwinding element (DUE), permitting loading of DNA polymerase. After initiation quickly degrades to an ADP-DnaA complex that is not apt for DNA replication. Binds acidic phospholipids. This chain is Chromosomal replication initiator protein DnaA, found in Borreliella afzelii (strain PKo) (Borrelia afzelii).